A 284-amino-acid polypeptide reads, in one-letter code: ATP synthase gamma chain (284 aa).

This sequence belongs to the ATPase gamma chain family. As to quaternary structure, F-type ATPases have 2 components, CF(1) - the catalytic core - and CF(0) - the membrane proton channel. CF(1) has five subunits: alpha(3), beta(3), gamma(1), delta(1), epsilon(1). CF(0) has three main subunits: a, b and c.

The protein localises to the cell membrane. In terms of biological role, produces ATP from ADP in the presence of a proton gradient across the membrane. The gamma chain is believed to be important in regulating ATPase activity and the flow of protons through the CF(0) complex. This Bacillus licheniformis (strain ATCC 14580 / DSM 13 / JCM 2505 / CCUG 7422 / NBRC 12200 / NCIMB 9375 / NCTC 10341 / NRRL NRS-1264 / Gibson 46) protein is ATP synthase gamma chain.